The sequence spans 1574 residues: Multiple epidermal growth factor-like domains protein 6 (1574 aa).

Positions 1 to 27 (MPVRAEARAAWRVVALALLLLPAMPAA) are cleaved as a signal peptide. In terms of domain architecture, EMI spans 40-122 (MPHVCAEQKL…QKPGQEGCLS (83 aa)). Cystine bridges form between cysteine 44-cysteine 108, cysteine 74-cysteine 80, cysteine 107-cysteine 120, cysteine 127-cysteine 138, cysteine 134-cysteine 147, cysteine 149-cysteine 162, cysteine 168-cysteine 179, cysteine 175-cysteine 188, cysteine 190-cysteine 203, cysteine 209-cysteine 220, cysteine 216-cysteine 230, cysteine 232-cysteine 245, cysteine 251-cysteine 262, cysteine 258-cysteine 271, cysteine 273-cysteine 286, cysteine 292-cysteine 303, cysteine 299-cysteine 312, cysteine 314-cysteine 327, cysteine 338-cysteine 349, cysteine 345-cysteine 358, cysteine 360-cysteine 373, cysteine 379-cysteine 389, cysteine 385-cysteine 398, cysteine 400-cysteine 411, cysteine 419-cysteine 430, cysteine 426-cysteine 439, cysteine 441-cysteine 454, cysteine 524-cysteine 537, cysteine 531-cysteine 544, cysteine 546-cysteine 555, cysteine 568-cysteine 580, cysteine 574-cysteine 587, cysteine 589-cysteine 598, cysteine 611-cysteine 623, cysteine 617-cysteine 630, cysteine 632-cysteine 641, cysteine 654-cysteine 668, cysteine 660-cysteine 675, cysteine 677-cysteine 686, cysteine 699-cysteine 711, cysteine 705-cysteine 718, cysteine 722-cysteine 731, cysteine 744-cysteine 755, cysteine 750-cysteine 762, cysteine 764-cysteine 773, cysteine 786-cysteine 799, cysteine 793-cysteine 806, cysteine 808-cysteine 817, cysteine 830-cysteine 842, cysteine 836-cysteine 849, cysteine 851-cysteine 860, cysteine 873-cysteine 886, cysteine 879-cysteine 893, cysteine 895-cysteine 904, cysteine 917-cysteine 929, cysteine 923-cysteine 936, cysteine 938-cysteine 947, cysteine 960-cysteine 972, cysteine 966-cysteine 979, cysteine 981-cysteine 990, cysteine 1003-cysteine 1015, cysteine 1009-cysteine 1022, cysteine 1024-cysteine 1033, cysteine 1046-cysteine 1058, cysteine 1052-cysteine 1065, cysteine 1067-cysteine 1076, cysteine 1089-cysteine 1101, cysteine 1095-cysteine 1108, cysteine 1110-cysteine 1119, cysteine 1132-cysteine 1144, cysteine 1138-cysteine 1151, cysteine 1153-cysteine 1162, cysteine 1175-cysteine 1187, cysteine 1181-cysteine 1194, cysteine 1196-cysteine 1205, cysteine 1218-cysteine 1231, cysteine 1224-cysteine 1238, cysteine 1240-cysteine 1249, cysteine 1262-cysteine 1274, cysteine 1268-cysteine 1281, cysteine 1283-cysteine 1292, cysteine 1305-cysteine 1317, cysteine 1311-cysteine 1324, cysteine 1326-cysteine 1335, cysteine 1348-cysteine 1360, cysteine 1354-cysteine 1367, cysteine 1369-cysteine 1378, cysteine 1391-cysteine 1403, cysteine 1397-cysteine 1410, cysteine 1412-cysteine 1421, cysteine 1434-cysteine 1446, cysteine 1440-cysteine 1453, cysteine 1455-cysteine 1464, cysteine 1477-cysteine 1489, cysteine 1483-cysteine 1496, cysteine 1498-cysteine 1507, cysteine 1520-cysteine 1532, cysteine 1526-cysteine 1539, and cysteine 1541-cysteine 1550. Residues 123 to 163 (DVDECASANGGCEGPCCNTVGGFYCRCPPGYQLQGDGKTCQ) enclose the EGF-like 1; calcium-binding domain. Residues 164-204 (DVDECRAHNGGCQHRCVNTPGSYLCECKPGFRLHTDGRTCL) form the EGF-like 2; calcium-binding domain. 2 EGF-like domains span residues 205 to 246 (AISS…RRCV) and 247 to 287 (RRSP…KTCE). The EGF-like 5; calcium-binding domain occupies 288–328 (DVDECALGLAQCAHGCLNTQGSFKCVCHAGYELGADGRQCY). 2 consecutive EGF-like domains span residues 334–374 (IVNS…KTCI) and 375–412 (DIDDCANSPCCQQACANTPGGYECSCFAGYRLNTDGCG). An EGF-like 8; calcium-binding domain is found at 415–455 (DVDECASGHGGCEHHCSNLAGSFQCFCEAGYRLDEDRRGCT). EGF-like domains lie at 520-556 (FGHDCSLTCDDCRNGGTCFPGQDGCDCPEGWTGIICN), 564-599 (FGKNCSSPCTCQNGGTCDPVLGACRCPPGVSGAHCE), 607-642 (YGKHCRKKCHCANRGRCHRLYGACLCDPGLYGRFCH), 650-687 (FGPGCSEDCLCEQSHTRSCNPKDGSCSCKAGFQGERCQ), 695-732 (FGPGCRHRCTCQPGVACDPVSGECRTQCPPGYQGEDCG), 740-774 (FGVNCSGSCSCVGAPCHRVTGECLCPPGKTGEDCG), 782-818 (WGLGCQEICPACEHGASCNPETGTCLCLPGFVGSRCQ), 826-861 (YGTGCQIRCACANDGHCDPTTGRCSCAPGWTGLSCQ), 869-905 (WGPDCIHPCNCSAGHGNCDAVSGLCLCEAGYEGPRCE), 913-948 (YGPSCEQKCRCEHGAACDHVSGACTCPAGWRGSFCE), 956-991 (FGLDCDSACNCSAGAPCDAVTGSCICPAGRWGPRCA), 999-1034 (FGLNCSQICTCFNGASCDSVTGQCHCAPGWMGPTCL), 1042-1077 (YGKNCQHSCLCRNGGRCDPILGQCTCPEGWTGLACE), 1085-1120 (YAAGCQLNCSCLHGGICDRLTGHCLCPAGWTGDKCQ), 1128-1163 (FGVHCEEHCACRKGASCHHVTGACFCPPGWRGPHCE), 1171-1206 (FGEACAQRCLCPTNASCHHVTGECRCPPGFTGLSCE), 1214-1250 (FGKDCEHLCQCPGETWACDPASGVCTCAAGYHGTGCL), 1258-1293 (YGPGCEHICKCLNGGTCDPATGACYCPAGFLGADCS), 1301-1336 (FGPSCAHVCACRQGAACDPVSGACICSPGKTGVRCE), 1344-1379 (FGKGCELKCACRNGGLCHATNGSCSCPLGWMGPHCE), 1387-1422 (YGAACLLECFCQNNGSCEPTTGACLCGPGFYGQACE), 1430-1465 (HGPGCQRVCECQQGAPCDPVSGQCLCPAGFHGQFCE), 1473-1508 (FGDGCLQQCNCHTGVPCDPISGLCLCPPGRTGAACD), and 1516-1551 (FGPGCALRCDCGGGADCDPISGQCHCVDSYMGPTCR). Over residues 1555–1568 (TQISSSRPAPQHPS) the composition is skewed to polar residues. The segment at 1555 to 1574 (TQISSSRPAPQHPSSRAMKH) is disordered.

As to expression, expressed in lung.

It is found in the secreted. The chain is Multiple epidermal growth factor-like domains protein 6 (Megf6) from Rattus norvegicus (Rat).